Consider the following 247-residue polypeptide: ATP synthase subunit a, chloroplastic (247 aa).

5 consecutive transmembrane segments (helical) span residues 38 to 58 (QVLI…VIAV), 95 to 115 (VPFI…GALL), 134 to 154 (INTT…AGLS), 199 to 219 (LVVV…VMFL), and 220 to 240 (GLFT…AYIG).

Belongs to the ATPase A chain family. As to quaternary structure, F-type ATPases have 2 components, CF(1) - the catalytic core - and CF(0) - the membrane proton channel. CF(1) has five subunits: alpha(3), beta(3), gamma(1), delta(1), epsilon(1). CF(0) has four main subunits: a, b, b' and c.

The protein localises to the plastid. It localises to the chloroplast thylakoid membrane. Functionally, key component of the proton channel; it plays a direct role in the translocation of protons across the membrane. The protein is ATP synthase subunit a, chloroplastic of Lolium perenne (Perennial ryegrass).